The sequence spans 566 residues: NAD-dependent malic enzyme (566 aa).

The active-site Proton donor is Tyr-104. Position 157 (Arg-157) interacts with NAD(+). Catalysis depends on Lys-175, which acts as the Proton acceptor. A divalent metal cation contacts are provided by Glu-246, Asp-247, and Asp-270. Residues Asp-270 and Asn-419 each coordinate NAD(+).

Belongs to the malic enzymes family. Homotetramer. Mg(2+) serves as cofactor. Requires Mn(2+) as cofactor.

It carries out the reaction (S)-malate + NAD(+) = pyruvate + CO2 + NADH. The enzyme catalyses oxaloacetate + H(+) = pyruvate + CO2. The sequence is that of NAD-dependent malic enzyme from Cronobacter sakazakii (strain ATCC BAA-894) (Enterobacter sakazakii).